A 119-amino-acid polypeptide reads, in one-letter code: Ribonuclease P protein component (119 aa).

It belongs to the RnpA family. Consists of a catalytic RNA component (M1 or rnpB) and a protein subunit.

It catalyses the reaction Endonucleolytic cleavage of RNA, removing 5'-extranucleotides from tRNA precursor.. Functionally, RNaseP catalyzes the removal of the 5'-leader sequence from pre-tRNA to produce the mature 5'-terminus. It can also cleave other RNA substrates such as 4.5S RNA. The protein component plays an auxiliary but essential role in vivo by binding to the 5'-leader sequence and broadening the substrate specificity of the ribozyme. This is Ribonuclease P protein component from Listeria monocytogenes serotype 4b (strain CLIP80459).